The following is a 215-amino-acid chain: Ribosomal RNA small subunit methyltransferase G (215 aa).

3 residues coordinate S-adenosyl-L-methionine: Gly-71, Leu-76, and Arg-135.

This sequence belongs to the methyltransferase superfamily. RNA methyltransferase RsmG family.

The protein resides in the cytoplasm. Its function is as follows. Specifically methylates the N7 position of a guanine in 16S rRNA. This is Ribosomal RNA small subunit methyltransferase G from Salinibacter ruber (strain DSM 13855 / M31).